The primary structure comprises 292 residues: Short chain dehydrogenase mpl6 (292 aa).

Val37, Asp95, Asn122, Arg156, Tyr188, Lys192, Val221, and Thr223 together coordinate NADP(+). The active-site Proton donor is the Tyr188. Catalysis depends on Lys192, which acts as the Lowers pKa of active site Tyr.

It belongs to the short-chain dehydrogenases/reductases (SDR) family.

It participates in mycotoxin biosynthesis. Its function is as follows. Short chain dehydrogenase; part of the gene cluster that mediates the biosynthesis of the mycotoxin citrinin, a hepato-nephrotoxic compound to humans due to inhibition of respiration complex III. The pathway begins with the synthesis of a keto-aldehyde intermediate by the citrinin PKS (pksCT) from successive condensations of 4 malonyl-CoA units, presumably with a simple acetyl-CoA starter unit. Release of the keto-aldehyde intermediate is consistent with the presence of the C-terminal reductive release domain. Mp11 collaborates with pksCT by catalyzing the hydrolysis of ACP-bound acyl intermediates to free the ACP from stalled intermediates. Mpl2 then catalyzes the oxidation of the C-12 methyl of the ketone intermediate to an alcohol intermediate which is further oxidized by the oxidoreductase mpl7 to produce a bisaldehyde intermediate. The fourth catalytic step is catalyzed by the mpl4 aldehyde dehydrogenase. The final transformation is the reduction of C-3 by mpl6 to provide the chemically stable citrinin nucleus. This is Short chain dehydrogenase mpl6 from Monascus purpureus (Red mold).